The chain runs to 124 residues: Large ribosomal subunit protein bL12 (124 aa).

The protein belongs to the bacterial ribosomal protein bL12 family. As to quaternary structure, homodimer. Part of the ribosomal stalk of the 50S ribosomal subunit. Forms a multimeric L10(L12)X complex, where L10 forms an elongated spine to which 2 to 4 L12 dimers bind in a sequential fashion. Binds GTP-bound translation factors.

Functionally, forms part of the ribosomal stalk which helps the ribosome interact with GTP-bound translation factors. Is thus essential for accurate translation. This chain is Large ribosomal subunit protein bL12, found in Leptothrix cholodnii (strain ATCC 51168 / LMG 8142 / SP-6) (Leptothrix discophora (strain SP-6)).